Here is a 311-residue protein sequence, read N- to C-terminus: Methionyl-tRNA formyltransferase (311 aa).

Residue 112–115 participates in (6S)-5,6,7,8-tetrahydrofolate binding; it reads SLLP.

It belongs to the Fmt family.

The enzyme catalyses L-methionyl-tRNA(fMet) + (6R)-10-formyltetrahydrofolate = N-formyl-L-methionyl-tRNA(fMet) + (6S)-5,6,7,8-tetrahydrofolate + H(+). Functionally, attaches a formyl group to the free amino group of methionyl-tRNA(fMet). The formyl group appears to play a dual role in the initiator identity of N-formylmethionyl-tRNA by promoting its recognition by IF2 and preventing the misappropriation of this tRNA by the elongation apparatus. The sequence is that of Methionyl-tRNA formyltransferase from Rhizobium leguminosarum bv. trifolii (strain WSM2304).